Here is a 706-residue protein sequence, read N- to C-terminus: SPX domain-containing membrane protein Os09g0521800 (706 aa).

The SPX domain occupies 2 to 145 (VNFSNKLTKD…GYKFTDYYVR (144 aa)). 6 consecutive transmembrane segments (helical) span residues 251 to 271 (MSLV…YIVV), 281 to 301 (LGAA…AQVF), 318 to 338 (LLFS…AFDL), 340 to 359 (SLTI…ARAV), 378 to 398 (AAFV…AGLL), and 414 to 434 (LPGW…WILF). Residues 475–498 (SEQDEEDDNGDEEHNETLSSSTTT) form a disordered region. Acidic residues predominate over residues 476–488 (EQDEEDDNGDEEH). 5 consecutive transmembrane segments (helical) span residues 520–540 (LLIY…SSVV), 554–574 (VFLA…GTYI), 583–603 (ILVA…KLTV), 611–631 (VCSA…NLSL), and 678–698 (LLNA…AATL).

It belongs to the major facilitator superfamily.

It is found in the membrane. The protein is SPX domain-containing membrane protein Os09g0521800 of Oryza sativa subsp. japonica (Rice).